The sequence spans 565 residues: NAD-dependent malic enzyme (565 aa).

Tyr-104 (proton donor) is an active-site residue. Arg-157 contributes to the NAD(+) binding site. Lys-175 serves as the catalytic Proton acceptor. Glu-246, Asp-247, and Asp-270 together coordinate a divalent metal cation. 2 residues coordinate NAD(+): Asp-270 and Asn-418.

This sequence belongs to the malic enzymes family. As to quaternary structure, homotetramer. It depends on Mg(2+) as a cofactor. The cofactor is Mn(2+).

It carries out the reaction (S)-malate + NAD(+) = pyruvate + CO2 + NADH. The catalysed reaction is oxaloacetate + H(+) = pyruvate + CO2. The chain is NAD-dependent malic enzyme from Photorhabdus laumondii subsp. laumondii (strain DSM 15139 / CIP 105565 / TT01) (Photorhabdus luminescens subsp. laumondii).